The following is a 172-amino-acid chain: Large ribosomal subunit protein uL10 (172 aa).

This sequence belongs to the universal ribosomal protein uL10 family. Part of the ribosomal stalk of the 50S ribosomal subunit. The N-terminus interacts with L11 and the large rRNA to form the base of the stalk. The C-terminus forms an elongated spine to which L12 dimers bind in a sequential fashion forming a multimeric L10(L12)X complex.

Functionally, forms part of the ribosomal stalk, playing a central role in the interaction of the ribosome with GTP-bound translation factors. The chain is Large ribosomal subunit protein uL10 from Rhizobium etli (strain ATCC 51251 / DSM 11541 / JCM 21823 / NBRC 15573 / CFN 42).